The primary structure comprises 322 residues: 4-diphosphocytidyl-2-C-methyl-D-erythritol kinase (322 aa).

The active site involves Lys-25. 110–120 serves as a coordination point for ATP; that stretch reads PVAGGMAGGSA. Asp-152 is a catalytic residue.

The protein belongs to the GHMP kinase family. IspE subfamily.

It carries out the reaction 4-CDP-2-C-methyl-D-erythritol + ATP = 4-CDP-2-C-methyl-D-erythritol 2-phosphate + ADP + H(+). It functions in the pathway isoprenoid biosynthesis; isopentenyl diphosphate biosynthesis via DXP pathway; isopentenyl diphosphate from 1-deoxy-D-xylulose 5-phosphate: step 3/6. In terms of biological role, catalyzes the phosphorylation of the position 2 hydroxy group of 4-diphosphocytidyl-2C-methyl-D-erythritol. In Mycolicibacterium vanbaalenii (strain DSM 7251 / JCM 13017 / BCRC 16820 / KCTC 9966 / NRRL B-24157 / PYR-1) (Mycobacterium vanbaalenii), this protein is 4-diphosphocytidyl-2-C-methyl-D-erythritol kinase.